The sequence spans 354 residues: Phospho-N-acetylmuramoyl-pentapeptide-transferase (354 aa).

The next 10 membrane-spanning stretches (helical) occupy residues 16 to 36 (YITV…LYLM), 66 to 86 (TPTM…LLTV), 88 to 108 (IHNP…AIGV), 130 to 150 (FFLQ…YAHL), 168 to 188 (IFGI…VNLT), 193 to 213 (GLAT…TYIT), 227 to 247 (IIGV…LIGF), 257 to 277 (VFMG…MAII), 282 to 302 (VLLI…IIQV), and 331 to 351 (KIIV…LITL).

Belongs to the glycosyltransferase 4 family. MraY subfamily. The cofactor is Mg(2+).

The protein localises to the cell inner membrane. The enzyme catalyses UDP-N-acetyl-alpha-D-muramoyl-L-alanyl-gamma-D-glutamyl-meso-2,6-diaminopimeloyl-D-alanyl-D-alanine + di-trans,octa-cis-undecaprenyl phosphate = di-trans,octa-cis-undecaprenyl diphospho-N-acetyl-alpha-D-muramoyl-L-alanyl-D-glutamyl-meso-2,6-diaminopimeloyl-D-alanyl-D-alanine + UMP. Its pathway is cell wall biogenesis; peptidoglycan biosynthesis. In terms of biological role, catalyzes the initial step of the lipid cycle reactions in the biosynthesis of the cell wall peptidoglycan: transfers peptidoglycan precursor phospho-MurNAc-pentapeptide from UDP-MurNAc-pentapeptide onto the lipid carrier undecaprenyl phosphate, yielding undecaprenyl-pyrophosphoryl-MurNAc-pentapeptide, known as lipid I. The chain is Phospho-N-acetylmuramoyl-pentapeptide-transferase from Nitratiruptor sp. (strain SB155-2).